The sequence spans 418 residues: Transmembrane protease serine 11D (418 aa).

At 1–20 (MYRPARVTSTSRFLNPYVVC) the chain is on the cytoplasmic side. A helical; Signal-anchor for type II membrane protein membrane pass occupies residues 21-41 (FIVVAGVVILAVTIALLVYFL). The Extracellular segment spans residues 42–418 (AFDQKSYFYR…LDWIRQQTGI (377 aa)). Residues 46 to 163 (KSYFYRSSFQ…STEITSLTDQ (118 aa)) enclose the SEA domain. Asparagine 144 carries an N-linked (GlcNAc...) asparagine glycan. Disulfide bonds link cysteine 173-cysteine 292, cysteine 212-cysteine 228, cysteine 337-cysteine 353, and cysteine 364-cysteine 393. Residues 187-417 (ILGGTEAEEG…YLDWIRQQTG (231 aa)) enclose the Peptidase S1 domain. Active-site charge relay system residues include histidine 227 and aspartate 272. Serine 368 serves as the catalytic Charge relay system.

This sequence belongs to the peptidase S1 family. Monomer. Located in the cells of the submucosal serous glands of the bronchi and trachea.

It is found in the cell membrane. The protein localises to the secreted. Its activity is regulated as follows. Strongly inhibited by diisopropyl fluorophosphate, leupeptin, antipain, aprotinin, and soybean trypsin inhibitor, but hardly inhibited by secretory leukocyte protease inhibitor at 10 microM. In terms of biological role, may play some biological role in the host defense system on the mucous membrane independently of or in cooperation with other substances in airway mucous or bronchial secretions. Plays a role in the proteolytic processing of ACE2. Proteolytically cleaves and activates the human coronavirus 229E (HCoV-229E) spike glycoprotein which facilitate virus-cell membrane fusions; spike proteins are synthesized and maintained in precursor intermediate folding states and proteolysis permits the refolding and energy release required to create stable virus-cell linkages and membrane coalescence. Preferentially cleaves the C-terminal side of arginine residues at the P1 position of certain peptides, cleaving Boc-Phe-Ser-Arg-4-methylcoumaryl-7-amide most efficiently and having an optimum pH of 8.6 with this substrate. The protein is Transmembrane protease serine 11D (TMPRSS11D) of Homo sapiens (Human).